The sequence spans 305 residues: RNA-binding protein with serine-rich domain 1 (305 aa).

Residues 1–10 (MDLSGVKKKS) are compositionally biased toward basic residues. The interval 1-161 (MDLSGVKKKS…KRRSPSPKPT (161 aa)) is necessary for interaction with SRP54, nuclear localization and exon-skipping. Residues 1–170 (MDLSGVKKKS…TKVHIGRLTR (170 aa)) form a disordered region. The segment at 1–220 (MDLSGVKKKS…ENPDEAEKAL (220 aa)) is necessary for interaction with the cleaved p110 isoform of CDC2L1. Residues lysine 7 and lysine 15 each participate in a glycyl lysine isopeptide (Lys-Gly) (interchain with G-Cter in SUMO2) cross-link. Over residues 33 to 59 (DRSDEKSKDRSKDKGATKESSEKDRGR) the composition is skewed to basic and acidic residues. Serine 53 is subject to Phosphoserine. Residues 68 to 126 (ASSGSSSTRSRSSSTSSSGSSTSTGSSSGSSSSSASSRSGSSSTSRSSSSSSSSGSPSP) show a composition bias toward low complexity. The tract at residues 69 to 121 (SSGSSSTRSRSSSTSSSGSSTSTGSSSGSSSSSASSRSGSSSTSRSSSSSSSS) is necessary for interactions with UPF2 and UPF3B and UPF2-dependent NMD. Composition is skewed to basic residues over residues 127–143 (SRRR…KSKP) and 151–167 (RKRR…HIGR). 2 positions are modified to phosphoserine: serine 155 and serine 157. A necessary for interaction with PNN and exon-skipping region spans residues 156-242 (PSPKPTKVHI…ITATAVLAPW (87 aa)). The tract at residues 159–244 (KPTKVHIGRL…ATAVLAPWPR (86 aa)) is interaction with SAP18 and ACIN1. Threonine 161 carries the phosphothreonine modification. One can recognise an RRM domain in the interval 161–240 (TKVHIGRLTR…QEITATAVLA (80 aa)). N6-acetyllysine is present on lysine 218. A necessary for interaction with TRA2B, nuclear localization and exon-skipping region spans residues 238–305 (VLAPWPRPPP…RSRSSSNSSR (68 aa)). Residues 240-305 (APWPRPPPRR…RSRSSSNSSR (66 aa)) form a disordered region. Positions 242–261 (WPRPPPRRFSPPRRMLPPLP) are enriched in pro residues. Positions 266-298 (SPPRMRRRSRSPRRRSPARRRSRSPGRRRHRSR) are enriched in basic residues.

Belongs to the splicing factor SR family. As to quaternary structure, found in mRNA splicing-dependent exon junction complexes (EJC). Found in a post-splicing complex with NXF1, RBM8A, UPF1, UPF2, UPF3A, UPF3B and RNPS1. Component of the heterotrimeric ASAP (apoptosis- and splicing-associated protein) and PSAP complexes consisting of RNPS1, SAP18 and either ACIN1 or PNN, respectively; the ASAP and PSAP complexes probably are formed mutually exclusive. Component of the active spliceosome. Associates with polysomes. Interacts with the cleaved p110 isoform of CDC2L1, CSNK2A1, PNN, SART3, SRP54, SRRM1 and TRA2B/SFRS10. In terms of processing, phosphorylated on one or more of the four Ser/Thr residues (Ser-43, Thr-49, Ser-52 or Ser-53). Ser-53 phosphorylation site is important for splicing and translation stimulation activity in vitro.

It is found in the nucleus. The protein localises to the nucleus speckle. It localises to the cytoplasm. Part of pre- and post-splicing multiprotein mRNP complexes. Auxiliary component of the splicing-dependent multiprotein exon junction complex (EJC) deposited at splice junction on mRNAs. The EJC is a dynamic structure consisting of core proteins and several peripheral nuclear and cytoplasmic associated factors that join the complex only transiently either during EJC assembly or during subsequent mRNA metabolism. Component of the ASAP and PSAP complexes which bind RNA in a sequence-independent manner and are proposed to be recruited to the EJC prior to or during the splicing process and to regulate specific excision of introns in specific transcription subsets. The ASAP complex can inhibit RNA processing during in vitro splicing reactions. The ASAP complex promotes apoptosis and is disassembled after induction of apoptosis. Enhances the formation of the ATP-dependent A complex of the spliceosome. Involved in both constitutive splicing and, in association with SRP54 and TRA2B/SFRS10, in distinctive modulation of alternative splicing in a substrate-dependent manner. Involved in the splicing modulation of BCL2L1/Bcl-X (and probably other apoptotic genes); specifically inhibits formation of proapoptotic isoforms such as Bcl-X(S); the activity is different from the established EJC assembly and function. Participates in mRNA 3'-end cleavage. Involved in UPF2-dependent nonsense-mediated decay (NMD) of mRNAs containing premature stop codons. Also mediates increase of mRNA abundance and translational efficiency. Binds spliced mRNA 20-25 nt upstream of exon-exon junctions. In Bos taurus (Bovine), this protein is RNA-binding protein with serine-rich domain 1 (RNPS1).